Reading from the N-terminus, the 397-residue chain is Ribosomal RNA large subunit methyltransferase I (397 aa).

Residues 2–78 enclose the PUA domain; that stretch reads TPAIYLVKGR…EQEPIDRDFF (77 aa).

The protein belongs to the methyltransferase superfamily. RlmI family.

It is found in the cytoplasm. The enzyme catalyses cytidine(1962) in 23S rRNA + S-adenosyl-L-methionine = 5-methylcytidine(1962) in 23S rRNA + S-adenosyl-L-homocysteine + H(+). Functionally, specifically methylates the cytosine at position 1962 (m5C1962) of 23S rRNA. The polypeptide is Ribosomal RNA large subunit methyltransferase I (Vibrio cholerae serotype O1 (strain ATCC 39541 / Classical Ogawa 395 / O395)).